Consider the following 219-residue polypeptide: Protein-L-isoaspartate O-methyltransferase 2 (219 aa).

Ser60 is a catalytic residue.

The protein belongs to the methyltransferase superfamily. L-isoaspartyl/D-aspartyl protein methyltransferase family.

Its subcellular location is the cytoplasm. The enzyme catalyses [protein]-L-isoaspartate + S-adenosyl-L-methionine = [protein]-L-isoaspartate alpha-methyl ester + S-adenosyl-L-homocysteine. Functionally, catalyzes the methyl esterification of L-isoaspartyl residues in peptides and proteins that result from spontaneous decomposition of normal L-aspartyl and L-asparaginyl residues. It plays a role in the repair and/or degradation of damaged proteins. This chain is Protein-L-isoaspartate O-methyltransferase 2 (pcm2), found in Archaeoglobus fulgidus (strain ATCC 49558 / DSM 4304 / JCM 9628 / NBRC 100126 / VC-16).